The sequence spans 306 residues: Protein SEC13 homolog (306 aa).

WD repeat units lie at residues 11–50, 56–97, 102–143, 150–195, 202–245, and 252–291; these read QHRD…QSYP, GHNG…WQKT, THEA…QQWQ, CHDQ…NEWT, CHKD…TAEW, and QAPC…QWIK.

This sequence belongs to the WD repeat SEC13 family. In terms of assembly, probably part of the GATOR complex.

The protein resides in the cytoplasmic vesicle. It is found in the COPII-coated vesicle membrane. Its subcellular location is the endoplasmic reticulum membrane. The protein localises to the nucleus. It localises to the nuclear pore complex. The protein resides in the lysosome membrane. Its function is as follows. Functions as a component of the nuclear pore complex (NPC) and the COPII coat. In terms of biological role, as a component of the GATOR complex may function in the amino acid-sensing branch of the TORC1 signaling pathway. This Caenorhabditis briggsae protein is Protein SEC13 homolog.